A 205-amino-acid chain; its full sequence is Holliday junction branch migration complex subunit RuvA (205 aa).

The domain I stretch occupies residues Met1 to Asn64. The interval Asp65 to Ser143 is domain II. Residues Ser144–Thr156 form a flexible linker region. The tract at residues Ser157–Leu205 is domain III.

Belongs to the RuvA family. Homotetramer. Forms an RuvA(8)-RuvB(12)-Holliday junction (HJ) complex. HJ DNA is sandwiched between 2 RuvA tetramers; dsDNA enters through RuvA and exits via RuvB. An RuvB hexamer assembles on each DNA strand where it exits the tetramer. Each RuvB hexamer is contacted by two RuvA subunits (via domain III) on 2 adjacent RuvB subunits; this complex drives branch migration. In the full resolvosome a probable DNA-RuvA(4)-RuvB(12)-RuvC(2) complex forms which resolves the HJ.

Its subcellular location is the cytoplasm. Its function is as follows. The RuvA-RuvB-RuvC complex processes Holliday junction (HJ) DNA during genetic recombination and DNA repair, while the RuvA-RuvB complex plays an important role in the rescue of blocked DNA replication forks via replication fork reversal (RFR). RuvA specifically binds to HJ cruciform DNA, conferring on it an open structure. The RuvB hexamer acts as an ATP-dependent pump, pulling dsDNA into and through the RuvAB complex. HJ branch migration allows RuvC to scan DNA until it finds its consensus sequence, where it cleaves and resolves the cruciform DNA. This is Holliday junction branch migration complex subunit RuvA from Photorhabdus laumondii subsp. laumondii (strain DSM 15139 / CIP 105565 / TT01) (Photorhabdus luminescens subsp. laumondii).